Reading from the N-terminus, the 169-residue chain is Putative phosphoesterase SACOL1020 (169 aa).

Residue H34 is the Proton donor of the active site. 2 short sequence motifs (HXTX) span residues 34–37 (HVTI) and 115–118 (HFTI). H115 (proton acceptor) is an active-site residue.

It belongs to the 2H phosphoesterase superfamily. YjcG family.

In Staphylococcus aureus (strain COL), this protein is Putative phosphoesterase SACOL1020.